We begin with the raw amino-acid sequence, 123 residues long: MARIAGIDLPKEKRVEIGLTYIYGIGLPTSQKILKETGVNSDTRVKDLTEEEVNLLRNYIKNLKIEGDLRREVALNIKRLIEIGSYRGIRHRKGLPVRGQKTKTNARTRKGPKKLVGAKKKSK.

Positions 92 to 123 (RKGLPVRGQKTKTNARTRKGPKKLVGAKKKSK) are disordered.

Belongs to the universal ribosomal protein uS13 family. Part of the 30S ribosomal subunit. Forms a loose heterodimer with protein S19. Forms two bridges to the 50S subunit in the 70S ribosome.

Functionally, located at the top of the head of the 30S subunit, it contacts several helices of the 16S rRNA. In the 70S ribosome it contacts the 23S rRNA (bridge B1a) and protein L5 of the 50S subunit (bridge B1b), connecting the 2 subunits; these bridges are implicated in subunit movement. Contacts the tRNAs in the A and P-sites. The protein is Small ribosomal subunit protein uS13 of Clostridium kluyveri (strain NBRC 12016).